The sequence spans 464 residues: 3-isopropylmalate dehydratase large subunit (464 aa).

[4Fe-4S] cluster is bound by residues Cys337, Cys397, and Cys400.

This sequence belongs to the aconitase/IPM isomerase family. LeuC type 1 subfamily. As to quaternary structure, heterodimer of LeuC and LeuD. [4Fe-4S] cluster serves as cofactor.

It carries out the reaction (2R,3S)-3-isopropylmalate = (2S)-2-isopropylmalate. It functions in the pathway amino-acid biosynthesis; L-leucine biosynthesis; L-leucine from 3-methyl-2-oxobutanoate: step 2/4. Catalyzes the isomerization between 2-isopropylmalate and 3-isopropylmalate, via the formation of 2-isopropylmaleate. The protein is 3-isopropylmalate dehydratase large subunit of Bacillus cereus (strain 03BB102).